The sequence spans 388 residues: Na(+)/H(+) antiporter NhaA (388 aa).

12 helical membrane passes run 14-34 (TIGI…NSPL), 59-79 (LLLW…GLEI), 95-115 (TFPA…FASL), 125-145 (GWAI…SLLG), 154-174 (VFLM…IALF), 177-197 (TKLS…LFIM), 200-220 (MCVI…VSVL), 222-242 (SGVH…YRIN), 257-277 (GLHL…NAGV), 295-315 (IMLG…YLAV), 328-348 (LIQF…SLFI), and 362-382 (ADKL…YIVL).

The protein belongs to the NhaA Na(+)/H(+) (TC 2.A.33) antiporter family.

It localises to the cell inner membrane. It catalyses the reaction Na(+)(in) + 2 H(+)(out) = Na(+)(out) + 2 H(+)(in). In terms of biological role, na(+)/H(+) antiporter that extrudes sodium in exchange for external protons. The polypeptide is Na(+)/H(+) antiporter NhaA (Nitratiruptor sp. (strain SB155-2)).